A 370-amino-acid polypeptide reads, in one-letter code: Asporin (370 aa).

The signal sequence occupies residues 1 to 15 (MKVYVLLVFLTLCSA). An O-linked (GalNAc...) serine glycan is attached at Ser-45. The LRRNT domain maps to 56 to 92 (FFPFDLFSTCPFGCQCYSRVVHCSDLGLSSVPSNIPF). Disulfide bonds link Cys-65–Cys-71 and Cys-69–Cys-78. LRR repeat units follow at residues 93-114 (DTRMVDLQNNKIKEIKENDFKG), 117-138 (SLYALILNNNKLTKIHPKAFLT), 141-163 (KLRRLYLSHNQLSEIPLNLPKSL), 164-183 (AELRIHDNKVKKIQKATFKG), 186-209 (ALHVLEMSANPLDNNGIEPGAFEG), 232-253 (TLLELHLDYNKISVVELEDFKR), 256-277 (DLQRLGLGNNRITDIENGSLAN), 280-302 (RVREIHLENNKLKKVPSGLQELK), 303-324 (YLQIIFLHSNSITKVGVNDFCP), 332-354 (SLYSAISLSNNPVKYWEVQPATF), and 355-370 (RCVLSRMSVQLGNFRK). The N-linked (GlcNAc...) asparagine glycan is linked to Asn-272. Residues Cys-323 and Cys-356 are joined by a disulfide bond.

It belongs to the small leucine-rich proteoglycan (SLRP) family. SLRP class I subfamily.

The protein localises to the secreted. It localises to the extracellular space. It is found in the extracellular matrix. In Bos taurus (Bovine), this protein is Asporin (ASPN).